We begin with the raw amino-acid sequence, 343 residues long: MTEEFDIRQERYRGNDGEREVENKLRPLTFDSFSGQDKVVENLSIFVAAARLRGEALDHTLLHGPPGLGKTTLSNIIANELGVGLKITSGPVLDKPGDLAGLLSSLESNDVLFIDEIHRLSPVVEEYLYSAMEDYRIDIMLDKGPSARSIQINLSPFTLVGATTRSGLLTAPLRARFGINLHLEYYDVHTITGIVERSARILEVSCSHDAAVEIAGRSRGTPRIANALLRRVRDFAQVKGSGAIDKPIACYALEALNIDRYGLDNVDHKLLATIIDKFAGGPVGLSTIATALGEDPGTIEEVYEPFLIKEGFLKRTPRGREVTELAYTHLGRNPRPHRPSLFD.

A large ATPase domain (RuvB-L) region spans residues 1–186; it reads MTEEFDIRQE…FGINLHLEYY (186 aa). ATP is bound by residues Leu25, Arg26, Gly67, Lys70, Thr71, Thr72, 133–135, Arg176, Tyr186, and Arg223; that span reads EDY. Residue Thr71 coordinates Mg(2+). The small ATPAse domain (RuvB-S) stretch occupies residues 187–257; the sequence is DVHTITGIVE…IACYALEALN (71 aa). Residues 260-343 form a head domain (RuvB-H) region; the sequence is RYGLDNVDHK…PRPHRPSLFD (84 aa). DNA is bound by residues Arg315 and Arg320.

Belongs to the RuvB family. Homohexamer. Forms an RuvA(8)-RuvB(12)-Holliday junction (HJ) complex. HJ DNA is sandwiched between 2 RuvA tetramers; dsDNA enters through RuvA and exits via RuvB. An RuvB hexamer assembles on each DNA strand where it exits the tetramer. Each RuvB hexamer is contacted by two RuvA subunits (via domain III) on 2 adjacent RuvB subunits; this complex drives branch migration. In the full resolvosome a probable DNA-RuvA(4)-RuvB(12)-RuvC(2) complex forms which resolves the HJ.

The protein resides in the cytoplasm. The catalysed reaction is ATP + H2O = ADP + phosphate + H(+). Its function is as follows. The RuvA-RuvB-RuvC complex processes Holliday junction (HJ) DNA during genetic recombination and DNA repair, while the RuvA-RuvB complex plays an important role in the rescue of blocked DNA replication forks via replication fork reversal (RFR). RuvA specifically binds to HJ cruciform DNA, conferring on it an open structure. The RuvB hexamer acts as an ATP-dependent pump, pulling dsDNA into and through the RuvAB complex. RuvB forms 2 homohexamers on either side of HJ DNA bound by 1 or 2 RuvA tetramers; 4 subunits per hexamer contact DNA at a time. Coordinated motions by a converter formed by DNA-disengaged RuvB subunits stimulates ATP hydrolysis and nucleotide exchange. Immobilization of the converter enables RuvB to convert the ATP-contained energy into a lever motion, pulling 2 nucleotides of DNA out of the RuvA tetramer per ATP hydrolyzed, thus driving DNA branch migration. The RuvB motors rotate together with the DNA substrate, which together with the progressing nucleotide cycle form the mechanistic basis for DNA recombination by continuous HJ branch migration. Branch migration allows RuvC to scan DNA until it finds its consensus sequence, where it cleaves and resolves cruciform DNA. This is Holliday junction branch migration complex subunit RuvB from Porphyromonas gingivalis (strain ATCC BAA-308 / W83).